We begin with the raw amino-acid sequence, 337 residues long: Inositol 2-dehydrogenase (337 aa).

This sequence belongs to the Gfo/Idh/MocA family. In terms of assembly, homotetramer.

The enzyme catalyses myo-inositol + NAD(+) = scyllo-inosose + NADH + H(+). Functionally, involved in the oxidation of myo-inositol (MI) to 2-keto-myo-inositol (2KMI or 2-inosose). This is Inositol 2-dehydrogenase from Corynebacterium glutamicum (strain R).